The following is a 1025-amino-acid chain: Probable outer membrane protein PmpF (1025 aa).

The signal sequence occupies residues 1-20 (MTRRILPLSLVFIPLSCISA). Residues 654–681 (NSTETQTANNSIQEQKNTSETFDSNSTT) form a disordered region. A compositionally biased stretch (polar residues) spans 659-681 (QTANNSIQEQKNTSETFDSNSTT). In terms of domain architecture, Autotransporter spans 748 to 1025 (LLPDDSWFAL…YMNAGGALVF (278 aa)).

The protein belongs to the PMP outer membrane protein family.

It is found in the secreted. The protein resides in the cell wall. It localises to the cell outer membrane. This chain is Probable outer membrane protein PmpF (pmpF), found in Chlamydia muridarum (strain MoPn / Nigg).